Reading from the N-terminus, the 599-residue chain is UPF0313 protein UNCMA_01890 (599 aa).

Residues 281–557 (EDIPALRTVR…RALLQYKNPE (277 aa)) form the Radical SAM core domain. Cysteine 299, cysteine 303, and cysteine 306 together coordinate [4Fe-4S] cluster.

It belongs to the UPF0313 family. Requires [4Fe-4S] cluster as cofactor.

In Methanocella arvoryzae (strain DSM 22066 / NBRC 105507 / MRE50), this protein is UPF0313 protein UNCMA_01890.